An 878-amino-acid chain; its full sequence is Probable glucan endo-1,3-beta-glucosidase ARB_02077 (878 aa).

The first 27 residues, 1 to 27, serve as a signal peptide directing secretion; sequence MARGLVSSLLLGQLLLVLVGLFSPAGA. Residues Asn228, Asn257, Asn290, and Asn297 are each glycosylated (N-linked (GlcNAc...) asparagine). Residues 373–472 are disordered; sequence AGSGSKAKRL…TACPSAPVTK (100 aa). Over residues 400–416 the composition is skewed to pro residues; the sequence is APAPQPPAQSTAPPYPI. Over residues 433-452 the composition is skewed to low complexity; it reads VPTRVPTGGVPSGTTGTAPS. 4 N-linked (GlcNAc...) asparagine glycosylation sites follow: Asn505, Asn659, Asn795, and Asn862.

The protein belongs to the glycosyl hydrolase 55 family.

It localises to the secreted. It carries out the reaction Hydrolysis of (1-&gt;3)-beta-D-glucosidic linkages in (1-&gt;3)-beta-D-glucans.. Probable glucan endo-1,3-beta-glucosidase involved in the hydrolysis of fungal cell wall. Classified as a small-oligosaccharide-producing type based its the end products: glucose, laminaribiose or laminaritetraose. The chain is Probable glucan endo-1,3-beta-glucosidase ARB_02077 from Arthroderma benhamiae (strain ATCC MYA-4681 / CBS 112371) (Trichophyton mentagrophytes).